The sequence spans 285 residues: Probable endonuclease 4 (285 aa).

Zn(2+) is bound by residues His-69, His-109, Glu-145, Asp-179, His-182, His-216, Asp-229, His-231, and Glu-261.

Belongs to the AP endonuclease 2 family. Zn(2+) is required as a cofactor.

It catalyses the reaction Endonucleolytic cleavage to 5'-phosphooligonucleotide end-products.. Its function is as follows. Endonuclease IV plays a role in DNA repair. It cleaves phosphodiester bonds at apurinic or apyrimidinic (AP) sites, generating a 3'-hydroxyl group and a 5'-terminal sugar phosphate. In Salmonella typhi, this protein is Probable endonuclease 4.